A 159-amino-acid polypeptide reads, in one-letter code: Afifavidin (159 aa).

The signal sequence occupies residues 1-23 (MRRLASLAVALPLLAVVASPALA). An Avidin-like domain is found at 36–151 (GVPAVSSSWV…GSDTFTLVNK (116 aa)). Residues asparagine 46, serine 50, tyrosine 66, asparagine 68, and glycine 74 each contribute to the biotin site. Residues cysteine 75 and cysteine 104 are joined by a disulfide bond. The biotin site is built by serine 106, threonine 108, and aspartate 144.

The protein belongs to the avidin/streptavidin family. As to quaternary structure, exhibits a dynamic oligomeric assembly: the apo form self-assembles mostly into toroid-shaped homooctamers, with a small fraction of homodimers, yet upon biotin binding the intact afifavidin consists solely of the dimer.

It is found in the secreted. Functionally, the exact role played by afifavidin is still obscure. Forms a strong non-covalent complex with biotin and 2-iminobiotin. The sequence is that of Afifavidin from Afifella pfennigii (Rhodobium pfennigii).